The following is a 431-amino-acid chain: MIDKVYCADVTPEMEGKKVKLAGWVYRKREVGKKVFIVLRDSSGIVQVVFSKDLNEEAYREAKKVGIESSVIIEGTVKADPRAPTGAEVQGEKLQIIQNVDFFPITKDASDEFLLDVRHLHLRSPKVAAIMKVKGTLMQAAREWLLQDGWYEVFPPILVTGAVEGGATLFKLKYFDRYAYLSQSAQLYLEAAIFGLEKVWSLTPSFRAEKSRTRRHLTEFWHLELEAAWMDLWDIMKVEEELVSYMVQRTLELRKKEIELYRKDDIKTLKNAVPPFPRISYDEAIDILQSKGVNIEWGEDMGADEERVLTEEFESPFFVYGYPKHIKAFYMKEDPEDPRKVLAADMLAPEGYGEIIGGSQREDDYDKLVQRILEEGMKPEDYEWYLDLRKYGSVPHSGFGLGLERLVAWVLKLDHVRWATLFPRTPSRLYP.

The protein belongs to the class-II aminoacyl-tRNA synthetase family.

Its subcellular location is the cytoplasm. It catalyses the reaction tRNA(Asn) + L-asparagine + ATP = L-asparaginyl-tRNA(Asn) + AMP + diphosphate + H(+). This chain is Asparagine--tRNA ligase, found in Thermococcus kodakarensis (strain ATCC BAA-918 / JCM 12380 / KOD1) (Pyrococcus kodakaraensis (strain KOD1)).